We begin with the raw amino-acid sequence, 777 residues long: Reticulon-1 (777 aa).

4 disordered regions span residues 1 to 77 (MAAP…ETAS), 129 to 182 (NGHI…ILAD), 198 to 245 (TRPQ…PVEG), and 293 to 573 (ATHE…IPGP). 2 positions are modified to phosphoserine: Ser-13 and Ser-68. The span at 199–233 (RPQEAKGQEEQSPGLEDKDLDFKDKDSEVSTKPEG) shows a compositional bias: basic and acidic residues. Residues Ser-210, Ser-241, and Ser-325 each carry the phosphoserine modification. Positions 326–339 (PGSVTPPSSGTEPS) are enriched in low complexity. Residues Ser-348 and Ser-350 each carry the phosphoserine modification. The segment covering 393–406 (IPSSLDQEASSAES) has biased composition (polar residues). Position 485 is a phosphoserine (Ser-485). Over residues 495–510 (AIREETSSRATEERAP) the composition is skewed to basic and acidic residues. Residues 525–534 (TPVTLQSRPE) are compositionally biased toward polar residues. Positions 590–777 (AIDLLYWRDI…KIPGAKRHAE (188 aa)) constitute a Reticulon domain. 2 consecutive transmembrane segments (helical) span residues 604–624 (IVFGSFLLLLFSLTQFSVVSV) and 706–726 (FAVLMWLLTYVGALFNGLTLL).

In terms of assembly, interacts with NDRG1. Interacts with BACE1. Interacts with TMEM33. As to quaternary structure, interacts with UGCG; regulates the ceramide glucosyltransferase activity of UGCG. Expressed predominantly in central and peripheral nervous system of newborn and adult rats. Low levels have been also detected in heart, adrenal gland and spleen. Expression of isoform RTN1-B is restricted to particular neuronal types.

Its subcellular location is the endoplasmic reticulum membrane. The protein localises to the golgi apparatus membrane. In terms of biological role, inhibits amyloid precursor protein processing, probably by blocking BACE1 activity. This is Reticulon-1 (Rtn1) from Rattus norvegicus (Rat).